We begin with the raw amino-acid sequence, 191 residues long: MQTIKCVVVGDGAVGKTCLLISYTTNKFPSEYVPTVFDNYAVTVMIGGEPYTLGLFDTAGQEDYDRLRPLSYPQTDVFLVCFSVVSPSSFENVKEKWVPEITHHCQKTPFLLVGTQIDLRDETSTLEKLAKNKQKPITMEQGEKLAKELKAVKYVECSALTQKGLKNVFDEAILAALEPPEPTKKRKCKFL.

Position 10–17 (10–17 (GDGAVGKT)) interacts with GTP. The short motif at 32 to 40 (YVPTVFDNY) is the Effector region element. GTP contacts are provided by residues 57-61 (DTAGQ) and 115-118 (TQID). At cysteine 188 the chain carries Cysteine methyl ester. Residue cysteine 188 is the site of S-geranylgeranyl cysteine attachment. Residues 189–191 (KFL) constitute a propeptide, removed in mature form.

This sequence belongs to the small GTPase superfamily. Rho family. CDC42 subfamily.

The protein localises to the cell junction. It localises to the adherens junction. It is found in the cell membrane. The catalysed reaction is GTP + H2O = GDP + phosphate + H(+). Its function is as follows. Regulates mbt kinase activity and is also required to recruit mbt to adherens junctions. Together with mbt, regulates photoreceptor cell morphogenesis. In Drosophila pseudoobscura pseudoobscura (Fruit fly), this protein is Cdc42 homolog.